The sequence spans 85 residues: uncharacterized protein (85 aa).

The protein belongs to the YciI family.

This is an uncharacterized protein from Bacillus subtilis (strain 168).